Reading from the N-terminus, the 957-residue chain is Glycine dehydrogenase (decarboxylating) (957 aa).

The residue at position 708 (lysine 708) is an N6-(pyridoxal phosphate)lysine.

The protein belongs to the GcvP family. As to quaternary structure, the glycine cleavage system is composed of four proteins: P, T, L and H. It depends on pyridoxal 5'-phosphate as a cofactor.

It carries out the reaction N(6)-[(R)-lipoyl]-L-lysyl-[glycine-cleavage complex H protein] + glycine + H(+) = N(6)-[(R)-S(8)-aminomethyldihydrolipoyl]-L-lysyl-[glycine-cleavage complex H protein] + CO2. Functionally, the glycine cleavage system catalyzes the degradation of glycine. The P protein binds the alpha-amino group of glycine through its pyridoxal phosphate cofactor; CO(2) is released and the remaining methylamine moiety is then transferred to the lipoamide cofactor of the H protein. The chain is Glycine dehydrogenase (decarboxylating) from Escherichia coli O17:K52:H18 (strain UMN026 / ExPEC).